A 930-amino-acid polypeptide reads, in one-letter code: Endoplasmic reticulum aminopeptidase 1 (930 aa).

Over Met-1–Pro-2 the chain is Cytoplasmic. The chain crosses the membrane as a helical; Signal-anchor for type II membrane protein span at residues Ser-3 to Ser-23. At Asp-24–Leu-930 the chain is on the lumenal side. 2 N-linked (GlcNAc...) asparagine glycosylation sites follow: Asn-59 and Asn-143. Substrate contacts are provided by residues Glu-172 and Gly-306–Asn-310. His-342 lines the Zn(2+) pocket. Glu-343 is an active-site residue. 2 residues coordinate Zn(2+): His-346 and Glu-365. Cys-393 and Cys-432 are oxidised to a cystine. 2 N-linked (GlcNAc...) asparagine glycosylation sites follow: Asn-403 and Asn-655. Cys-725 and Cys-732 are disulfide-bonded. Asn-749 and Asn-890 each carry an N-linked (GlcNAc...) asparagine glycan.

Belongs to the peptidase M1 family. Monomer. May also exist as a heterodimer; with ERAP2. Interacts with RBMX. The cofactor is Zn(2+). Post-translationally, N-glycosylated.

The protein resides in the endoplasmic reticulum membrane. Its function is as follows. Aminopeptidase that plays a central role in peptide trimming, a step required for the generation of most HLA class I-binding peptides. Peptide trimming is essential to customize longer precursor peptides to fit them to the correct length required for presentation on MHC class I molecules. Strongly prefers substrates 9-16 residues long. Rapidly degrades 13-mer to a 9-mer and then stops. Preferentially hydrolyzes the residue Leu and peptides with a hydrophobic C-terminus, while it has weak activity toward peptides with charged C-terminus. May play a role in the inactivation of peptide hormones. May be involved in the regulation of blood pressure through the inactivation of angiotensin II and/or the generation of bradykinin in the kidney. The protein is Endoplasmic reticulum aminopeptidase 1 (Erap1) of Mus musculus (Mouse).